Here is a 302-residue protein sequence, read N- to C-terminus: 4-hydroxy-tetrahydrodipicolinate synthase (302 aa).

Thr-55 lines the pyruvate pocket. Residue Tyr-144 is the Proton donor/acceptor of the active site. Residue Lys-172 is the Schiff-base intermediate with substrate of the active site. Val-214 is a binding site for pyruvate.

Belongs to the DapA family. Homotetramer; dimer of dimers.

The protein resides in the cytoplasm. The catalysed reaction is L-aspartate 4-semialdehyde + pyruvate = (2S,4S)-4-hydroxy-2,3,4,5-tetrahydrodipicolinate + H2O + H(+). Its pathway is amino-acid biosynthesis; L-lysine biosynthesis via DAP pathway; (S)-tetrahydrodipicolinate from L-aspartate: step 3/4. Its function is as follows. Catalyzes the condensation of (S)-aspartate-beta-semialdehyde [(S)-ASA] and pyruvate to 4-hydroxy-tetrahydrodipicolinate (HTPA). The chain is 4-hydroxy-tetrahydrodipicolinate synthase from Synechococcus sp. (strain WH7803).